A 152-amino-acid chain; its full sequence is Regulatory protein RecX (152 aa).

Belongs to the RecX family.

The protein resides in the cytoplasm. In terms of biological role, modulates RecA activity. The polypeptide is Regulatory protein RecX (Chromohalobacter salexigens (strain ATCC BAA-138 / DSM 3043 / CIP 106854 / NCIMB 13768 / 1H11)).